A 300-amino-acid polypeptide reads, in one-letter code: Acetylglutamate kinase (300 aa).

Substrate-binding positions include 68 to 69, Arg-90, and Asn-194; that span reads GG.

The protein belongs to the acetylglutamate kinase family. ArgB subfamily.

The protein resides in the cytoplasm. It carries out the reaction N-acetyl-L-glutamate + ATP = N-acetyl-L-glutamyl 5-phosphate + ADP. It participates in amino-acid biosynthesis; L-arginine biosynthesis; N(2)-acetyl-L-ornithine from L-glutamate: step 2/4. In terms of biological role, catalyzes the ATP-dependent phosphorylation of N-acetyl-L-glutamate. This chain is Acetylglutamate kinase, found in Methanocella arvoryzae (strain DSM 22066 / NBRC 105507 / MRE50).